We begin with the raw amino-acid sequence, 263 residues long: Endolytic peptidoglycan transglycosylase RlpA (263 aa).

Residues 1 to 16 form the signal peptide; sequence MNRIYLYLLIVLILAG. Cys17 carries the N-palmitoyl cysteine lipid modification. The S-diacylglycerol cysteine moiety is linked to residue Cys17. One can recognise an SPOR domain in the interval 182-257; the sequence is KNNALEYVIQ…AGYDSAFIKT (76 aa).

It belongs to the RlpA family.

The protein localises to the cell membrane. In terms of biological role, lytic transglycosylase with a strong preference for naked glycan strands that lack stem peptides. This chain is Endolytic peptidoglycan transglycosylase RlpA, found in Vibrio cholerae serotype O1 (strain ATCC 39315 / El Tor Inaba N16961).